The sequence spans 52 residues: ATP synthase protein 8 (52 aa).

A helical membrane pass occupies residues 7–27 (MKWFLIYFIYLLIFYLFIMLI).

Belongs to the ATPase protein 8 family. As to quaternary structure, F-type ATPases have 2 components, CF(1) - the catalytic core - and CF(0) - the membrane proton channel.

It localises to the mitochondrion membrane. In terms of biological role, mitochondrial membrane ATP synthase (F(1)F(0) ATP synthase or Complex V) produces ATP from ADP in the presence of a proton gradient across the membrane which is generated by electron transport complexes of the respiratory chain. F-type ATPases consist of two structural domains, F(1) - containing the extramembraneous catalytic core and F(0) - containing the membrane proton channel, linked together by a central stalk and a peripheral stalk. During catalysis, ATP synthesis in the catalytic domain of F(1) is coupled via a rotary mechanism of the central stalk subunits to proton translocation. Part of the complex F(0) domain. Minor subunit located with subunit a in the membrane. This chain is ATP synthase protein 8 (mt:ATPase8), found in Apis mellifera ligustica (Common honeybee).